Consider the following 97-residue polypeptide: Co-chaperonin GroES (97 aa).

Belongs to the GroES chaperonin family. Heptamer of 7 subunits arranged in a ring. Interacts with the chaperonin GroEL.

It is found in the cytoplasm. In terms of biological role, together with the chaperonin GroEL, plays an essential role in assisting protein folding. The GroEL-GroES system forms a nano-cage that allows encapsulation of the non-native substrate proteins and provides a physical environment optimized to promote and accelerate protein folding. GroES binds to the apical surface of the GroEL ring, thereby capping the opening of the GroEL channel. This is Co-chaperonin GroES from Stutzerimonas stutzeri (Pseudomonas stutzeri).